The sequence spans 422 residues: DNA-directed RNA polymerase III subunit RPC4 (422 aa).

Disordered stretches follow at residues 1–80, 115–190, 219–244, and 318–350; these read MSSN…GQQR, KSEG…DDEE, IQEALSEKPTREPTPSVKTEPVGTGL, and RPAVKEEKEDMETQASDPSKKKKNIKKKDTKDA. The Nuclear localization signal signature appears at 25–29; the sequence is KPSLK. The segment covering 28–37 has biased composition (basic residues); that stretch reads LKFKPKAVAR. Positions 38 to 64 are enriched in basic and acidic residues; sequence KSKEEREAAASKVKLEEESKRGNDKKH. Phosphoserine occurs at positions 137 and 138. Acidic residues predominate over residues 138–148; that stretch reads SENEAEDDDNE. Positions 160–170 are enriched in basic and acidic residues; sequence MGKEFEARNLI. A phosphoserine mark is found at serine 178, serine 182, and serine 224. Basic and acidic residues predominate over residues 219–229; the sequence is IQEALSEKPTR. Phosphothreonine is present on residues threonine 228 and threonine 232.

This sequence belongs to the eukaryotic RPC4/POLR3D RNA polymerase subunit family. As to quaternary structure, component of the RNA polymerase III (Pol III) complex consisting of 17 subunits. Interacts with RPC37/RPC5. RPC53/RPC4, RPC37/RPC5 and RPC11/RPC10 probably form a Pol III subcomplex.

The protein localises to the nucleus. DNA-dependent RNA polymerase catalyzes the transcription of DNA into RNA using the four ribonucleoside triphosphates as substrates. Specific peripheric component of RNA polymerase III which synthesizes small RNAs, such as 5S rRNA and tRNAs. Essential for tRNA synthesis. The RPC53/RPC4-RPC37/RPC5 subcomplex is required for terminator recognition and reinitiation. The chain is DNA-directed RNA polymerase III subunit RPC4 (RPC53) from Saccharomyces cerevisiae (strain ATCC 204508 / S288c) (Baker's yeast).